A 198-amino-acid chain; its full sequence is 5'-deoxynucleotidase hdd1 (198 aa).

In terms of domain architecture, HD spans I38 to I144. A divalent metal cation-binding residues include H41, H69, D70, E73, D78, I79, and D139.

The protein belongs to the HDDC2 family. As to quaternary structure, homodimer. It depends on Mn(2+) as a cofactor. The cofactor is Co(2+). Mg(2+) is required as a cofactor.

The protein resides in the cytoplasm. Its subcellular location is the nucleus. The enzyme catalyses a 2'-deoxyribonucleoside 5'-phosphate + H2O = a 2'-deoxyribonucleoside + phosphate. Catalyzes the dephosphorylation of the nucleoside 5'-monophosphates deoxyadenosine monophosphate (dAMP), deoxycytidine monophosphate (dCMP), deoxyguanosine monophosphate (dGMP) and deoxythymidine monophosphate (dTMP). The sequence is that of 5'-deoxynucleotidase hdd1 from Schizosaccharomyces pombe (strain 972 / ATCC 24843) (Fission yeast).